A 1028-amino-acid polypeptide reads, in one-letter code: Contactin-6 (1028 aa).

The signal sequence occupies residues 1 to 19 (MRLLWKLVILLPLINSCAG). 6 consecutive Ig-like C2-type domains span residues 32–117 (PQDV…AKLQ), 122–208 (EDFE…RSVQ), 227–308 (PKIE…RNLA), 318–402 (PEWE…AELR), 408–495 (PDFS…GSLI), and 499–587 (RTVI…ERLS). Intrachain disulfides connect cysteine 50–cysteine 100, cysteine 144–cysteine 196, cysteine 249–cysteine 297, cysteine 339–cysteine 386, cysteine 431–cysteine 479, and cysteine 521–cysteine 577. Residues asparagine 65 and asparagine 193 are each glycosylated (N-linked (GlcNAc...) asparagine). N-linked (GlcNAc...) asparagine glycans are attached at residues asparagine 368, asparagine 377, and asparagine 468. 4 Fibronectin type-III domains span residues 600–698 (PPED…TKAS), 703–800 (APVN…SGED), 805–901 (APRG…TKKS), and 902–996 (PPSQ…KMSS). N-linked (GlcNAc...) asparagine glycosylation is found at asparagine 659, asparagine 765, asparagine 860, and asparagine 865. Tyrosine 882 bears the Phosphotyrosine mark. Residues 887-902 (TGPSSPPVNVTTKKSP) show a composition bias toward polar residues. The disordered stretch occupies residues 887–908 (TGPSSPPVNVTTKKSPPSQPPA). 4 N-linked (GlcNAc...) asparagine glycosylation sites follow: asparagine 895, asparagine 931, asparagine 956, and asparagine 957. Serine 999 carries the GPI-anchor amidated serine lipid modification. Residues 1000–1028 (VGVQILKPSTQFLTMVGFFYCFVIQPLSR) constitute a propeptide, removed in mature form.

It belongs to the immunoglobulin superfamily. Contactin family. In terms of assembly, interacts with PTPRG. Specifically expressed in neuronal cells. In brain, it is expressed in spinal cord, cerebrum and cerebellum. At 17 dpc, it is expressed in hippocampus, cerebellum, and the brain stem. Strongly expressed after birth with a maximum level between P1 and P21, which corresponds to the time frame of oligodendrogliogenesis.

The protein localises to the cell membrane. Contactins mediate cell surface interactions during nervous system development. Participates in oligodendrocytes generation by acting as a ligand of NOTCH1. Its association with NOTCH1 promotes NOTCH1 activation through the released notch intracellular domain (NICD) and subsequent translocation to the nucleus. May be involved in motor coordination. This Rattus norvegicus (Rat) protein is Contactin-6 (Cntn6).